The chain runs to 335 residues: Ketol-acid reductoisomerase (NADP(+)) (335 aa).

The KARI N-terminal Rossmann domain maps to 5 to 185 (SKIYTDKDSN…GATRAGVIPT (181 aa)). Residues 28–31 (YGSQ), Ser-56, and 86–89 (DMVQ) each bind NADP(+). His-111 is an active-site residue. An NADP(+)-binding site is contributed by Gly-137. In terms of domain architecture, KARI C-terminal knotted spans 186–331 (TFKEETETDL…NQLKDLIQKG (146 aa)). Residues Asp-194, Glu-198, Glu-230, and Glu-234 each coordinate Mg(2+). Position 255 (Ser-255) interacts with substrate.

It belongs to the ketol-acid reductoisomerase family. Mg(2+) serves as cofactor.

The catalysed reaction is (2R)-2,3-dihydroxy-3-methylbutanoate + NADP(+) = (2S)-2-acetolactate + NADPH + H(+). It carries out the reaction (2R,3R)-2,3-dihydroxy-3-methylpentanoate + NADP(+) = (S)-2-ethyl-2-hydroxy-3-oxobutanoate + NADPH + H(+). It functions in the pathway amino-acid biosynthesis; L-isoleucine biosynthesis; L-isoleucine from 2-oxobutanoate: step 2/4. It participates in amino-acid biosynthesis; L-valine biosynthesis; L-valine from pyruvate: step 2/4. Functionally, involved in the biosynthesis of branched-chain amino acids (BCAA). Catalyzes an alkyl-migration followed by a ketol-acid reduction of (S)-2-acetolactate (S2AL) to yield (R)-2,3-dihydroxy-isovalerate. In the isomerase reaction, S2AL is rearranged via a Mg-dependent methyl migration to produce 3-hydroxy-3-methyl-2-ketobutyrate (HMKB). In the reductase reaction, this 2-ketoacid undergoes a metal-dependent reduction by NADPH to yield (R)-2,3-dihydroxy-isovalerate. This chain is Ketol-acid reductoisomerase (NADP(+)), found in Saccharolobus islandicus (strain Y.G.57.14 / Yellowstone #1) (Sulfolobus islandicus).